A 246-amino-acid chain; its full sequence is MRVVVVDLDGVDGADLALERAYERAAALDDGATPATTYARDVRAPGAADGFIGDGATAAMASRTCARAWTALRAGGTVIARGGDAARDAAVLAGFADVVVDATRGVVRGTKPAWARGTAFSLKSRAVRVVTADAGWGADADVDDELIDESALLTELDVNSTAVKYDDCDVGAGKKACKNCTCGRAEAEAAEESANAKSEETFVSACGNCALGDAFRCAGCPYLGQPAFKDTDAVGTKVELDLGDDL.

The N-terminal SAM-like domain stretch occupies residues 1-124 (MRVVVVDLDG…ARGTAFSLKS (124 aa)). Residues 125–158 (RAVRVVTADAGWGADADVDDELIDESALLTELDV) form a linker region. Residues Cys-168, Cys-177, Cys-180, and Cys-182 each coordinate [2Fe-2S] cluster. The fe-S binding site A stretch occupies residues 168–182 (CDVGAGKKACKNCTC). [4Fe-4S] cluster is bound by residues Cys-206, Cys-209, Cys-217, and Cys-220. Short sequence motifs (cx2C motif) lie at residues 206–209 (CGNC) and 217–220 (CAGC). The interval 206-220 (CGNCALGDAFRCAGC) is fe-S binding site B.

Belongs to the anamorsin family. Monomer. [2Fe-2S] cluster is required as a cofactor. [4Fe-4S] cluster serves as cofactor.

It is found in the cytoplasm. It localises to the mitochondrion intermembrane space. Functionally, component of the cytosolic iron-sulfur (Fe-S) protein assembly (CIA) machinery. Required for the maturation of extramitochondrial Fe-S proteins. Part of an electron transfer chain functioning in an early step of cytosolic Fe-S biogenesis, facilitating the de novo assembly of a [4Fe-4S] cluster on the cytosolic Fe-S scaffold complex. Electrons are transferred from NADPH via a FAD- and FMN-containing diflavin oxidoreductase. Together with the diflavin oxidoreductase, also required for the assembly of the diferric tyrosyl radical cofactor of ribonucleotide reductase (RNR), probably by providing electrons for reduction during radical cofactor maturation in the catalytic small subunit. This is Anamorsin homolog from Ostreococcus tauri.